We begin with the raw amino-acid sequence, 89 residues long: Small ribosomal subunit protein uS15 (89 aa).

This sequence belongs to the universal ribosomal protein uS15 family. As to quaternary structure, part of the 30S ribosomal subunit. Forms a bridge to the 50S subunit in the 70S ribosome, contacting the 23S rRNA.

In terms of biological role, one of the primary rRNA binding proteins, it binds directly to 16S rRNA where it helps nucleate assembly of the platform of the 30S subunit by binding and bridging several RNA helices of the 16S rRNA. Forms an intersubunit bridge (bridge B4) with the 23S rRNA of the 50S subunit in the ribosome. The chain is Small ribosomal subunit protein uS15 from Pseudomonas savastanoi pv. phaseolicola (strain 1448A / Race 6) (Pseudomonas syringae pv. phaseolicola (strain 1448A / Race 6)).